Consider the following 433-residue polypeptide: ATP-dependent RNA helicase SUB2 (433 aa).

The segment covering 1–17 (MSAENQEELLDYSDSEE) has biased composition (acidic residues). The segment at 1-39 (MSAENQEELLDYSDSEEIAVPTTTQAGEGESANDKEADK) is disordered. The Q motif signature appears at 49-77 (TGFRDFLLKPELLRAIGDCGFEHPSEVQQ). In terms of domain architecture, Helicase ATP-binding spans 80-255 (IPQSILGTDV…KKFMQNPLEI (176 aa)). 93–100 (AKSGLGKT) contributes to the ATP binding site. The DEAD box signature appears at 202-205 (DECD). The region spanning 267-428 (GLQQYYIKLE…EFPEEGVDPS (162 aa)) is the Helicase C-terminal domain.

It belongs to the DEAD box helicase family. DECD subfamily.

The protein localises to the nucleus. It catalyses the reaction ATP + H2O = ADP + phosphate + H(+). ATP-binding RNA helicase involved in transcription elongation and required for the export of mRNA out of the nucleus. SUB2 also plays a role in pre-mRNA splicing and spliceosome assembly. May be involved in rDNA and telomeric silencing, and maintenance of genome integrity. In Lodderomyces elongisporus (strain ATCC 11503 / CBS 2605 / JCM 1781 / NBRC 1676 / NRRL YB-4239) (Yeast), this protein is ATP-dependent RNA helicase SUB2 (SUB2).